Here is a 114-residue protein sequence, read N- to C-terminus: Adapter SH3BGRL (114 aa).

Positions 13-50 (SMAIKKKQQDVLGFLEANKIGFEEKDIAANEENRKWMR) are required for interaction with HER2. The segment at 54–71 (PENSRPATGYPLPPQIFN) is required for interaction with PFN1, HER2, and ATG12. The SH3-binding motif lies at 61-67 (TGYPLPP).

This sequence belongs to the SH3BGR family. As to quaternary structure, monomer. Interacts with PFN1/Profilin-1. Interacts with ERBB2. Interacts with ATG12. Interacts with BECN1. Interacts with translating ribosomes.

Its subcellular location is the cytoplasm. It localises to the cytosol. It is found in the cell membrane. Its function is as follows. Appears to function as an adapter protein that bridges proteins together or proteins with mRNAs. May function as a ubiquitin ligase-substrate adapter. Additionally, associates with translating cytoplasmic ribosomes and may promote the expression of specific mRNAs. This Bos taurus (Bovine) protein is Adapter SH3BGRL (SH3BGRL).